Consider the following 2028-residue polypeptide: Protein Daple (2028 aa).

The region spanning 11-131 (LFLQSPLVTW…KVLLLVLGCA (121 aa)) is the Calponin-homology (CH) domain. The interval 222–250 (AQHPPSPIKSSSADSTPSPTSSLSSEDKQ) is disordered. Phosphoserine occurs at positions 227 and 239. A compositionally biased stretch (low complexity) spans 229–245 (IKSSSADSTPSPTSSLS). 4 coiled-coil regions span residues 247-428 (EDKQ…SMNE), 456-1017 (ELNE…QGEG), 1045-1094 (HKEA…SSQI), and 1139-1393 (LQNH…DQYK). S486 bears the Phosphoserine mark. Positions 1011–1024 (RQNQGEGQHLQNSF) are enriched in polar residues. Residues 1011 to 1043 (RQNQGEGQHLQNSFKHPAGKTAASHQGKEAWGP) are disordered. The segment covering 1419 to 1428 (KEGSRERLKS) has biased composition (basic and acidic residues). Disordered stretches follow at residues 1419-1724 (KEGS…GAKM) and 1736-1803 (AAPT…SLSR). Low complexity-rich tracts occupy residues 1439-1450 (SSDPASPAASQP), 1517-1534 (SRTC…NSTP), and 1568-1588 (SRPS…PLNL). S1444 carries the post-translational modification Phosphoserine. The span at 1589–1604 (KGSSEQLHGRSESFSS) shows a compositional bias: polar residues. At S1601 the chain carries Phosphoserine. The GBA motif lies at 1661 to 1691 (CSASPSSEMVTLEEFLEESNRSSPTHDTPSC). The span at 1689–1704 (PSCRDDLLSDYFRKAS) shows a compositional bias: basic and acidic residues. A compositionally biased stretch (low complexity) spans 1792-1803 (HAPASRSASLSR). Position 1806 is a phosphoserine (S1806). Residues 1816 to 2021 (SGPEACKQES…PEPGGDPQTV (206 aa)) are disordered. Residues 1842–1855 (SHTLQSPAPPSSHS) are compositionally biased toward polar residues. The segment covering 1879 to 1897 (RPLDTRRFSLAPPKEERLA) has biased composition (basic and acidic residues). Over residues 1902-1924 (SATAPAIATAGAGAAAAGSGSNS) the composition is skewed to low complexity. Phosphothreonine is present on T1954. A PDZ-binding motif is present at residues 2025-2028 (YGCV). The interval 2026-2028 (GCV) is DVL1-binding.

This sequence belongs to the CCDC88 family. Homooligomer. Interacts with DVL1 (via PDZ domain); dissociates following initiation of non-canonical Wnt signaling. Interacts (via C-terminus) with ligand-activated Wnt receptor FZD7; competes with DVL1 for binding to FZD7 and displaces DVL1 from ligand-activated FZD7. Interacts (via GBA motif) with guanine nucleotide-binding protein G(i) alpha subunits GNAI1, GNAI2 and GNAI3 (inactive GDP-bound form); interacts with higher affinity with GNAI1 and GNAI3 than with GNAI2 and interaction leads to G(i) alpha subunit activation. Does not interact with GNAO1.

The protein resides in the cytoplasm. It localises to the cell junction. Functionally, required for activation of guanine nucleotide-binding proteins (G-proteins) during non-canonical Wnt signaling. Binds to ligand-activated Wnt receptor FZD7, displacing DVL1 from the FZD7 receptor and leading to inhibition of canonical Wnt signaling. Acts as a non-receptor guanine nucleotide exchange factor by also binding to guanine nucleotide-binding protein G(i) alpha (Gi-alpha) subunits, leading to their activation. Binding to Gi-alpha subunits displaces the beta and gamma subunits from the heterotrimeric G-protein complex, triggering non-canonical Wnt responses such as activation of RAC1 and PI3K-AKT signaling. Promotes apical constriction of cells via ARHGEF18. In Homo sapiens (Human), this protein is Protein Daple (CCDC88C).